The following is a 529-amino-acid chain: Peptide chain release factor 3 (529 aa).

A tr-type G domain is found at asparagine 11 to glutamine 280. Residues serine 20–threonine 27, aspartate 88–histidine 92, and asparagine 142–aspartate 145 contribute to the GTP site.

This sequence belongs to the TRAFAC class translation factor GTPase superfamily. Classic translation factor GTPase family. PrfC subfamily.

The protein resides in the cytoplasm. In terms of biological role, increases the formation of ribosomal termination complexes and stimulates activities of RF-1 and RF-2. It binds guanine nucleotides and has strong preference for UGA stop codons. It may interact directly with the ribosome. The stimulation of RF-1 and RF-2 is significantly reduced by GTP and GDP, but not by GMP. This chain is Peptide chain release factor 3, found in Mannheimia succiniciproducens (strain KCTC 0769BP / MBEL55E).